Reading from the N-terminus, the 478-residue chain is NADH-quinone oxidoreductase subunit N 1 (478 aa).

Helical transmembrane passes span 6–26 (TVLP…SGVF), 33–53 (FAIT…LVAA), 71–91 (FADV…VTFN), 99–119 (FEFP…VSAS), 121–141 (LITL…LAAF), 156–176 (FVLG…VYGF), 193–212 (PTAA…GLAF), 244–264 (IAVF…VLGQ), 265–285 (WRDL…IGAI), 299–319 (IGHM…GVSG), 321–341 (LIYL…IIAM), 364–384 (FAFV…LAGF), 388–408 (FYVF…LGII), and 438–458 (AGVS…VFHP).

It belongs to the complex I subunit 2 family. In terms of assembly, NDH-1 is composed of 14 different subunits. Subunits NuoA, H, J, K, L, M, N constitute the membrane sector of the complex.

Its subcellular location is the cell inner membrane. The enzyme catalyses a quinone + NADH + 5 H(+)(in) = a quinol + NAD(+) + 4 H(+)(out). In terms of biological role, NDH-1 shuttles electrons from NADH, via FMN and iron-sulfur (Fe-S) centers, to quinones in the respiratory chain. The immediate electron acceptor for the enzyme in this species is believed to be ubiquinone. Couples the redox reaction to proton translocation (for every two electrons transferred, four hydrogen ions are translocated across the cytoplasmic membrane), and thus conserves the redox energy in a proton gradient. This chain is NADH-quinone oxidoreductase subunit N 1, found in Acidiphilium cryptum (strain JF-5).